The chain runs to 90 residues: MKLSVCLLLVTLALCCYQANAEFCPALVSELLDFFFISEPLFKLSLAKFDAPPEAVAAKLGVKRCTDQMSLQKRSLIAEVLVKILKKCSV.

The signal sequence occupies residues 1-21 (MKLSVCLLLVTLALCCYQANA).

Belongs to the secretoglobin family. Lipophilin subfamily. In terms of tissue distribution, highest expression was found in skeletal muscle. Expressed as well in thymus, trachea, kidney, steroid responsive tissues (prostate, testis, uterus, breast and ovary) and salivary gland.

It is found in the secreted. May bind androgens and other steroids, may also bind estramustine, a chemotherapeutic agent used for prostate cancer. May be under transcriptional regulation of steroid hormones. This Homo sapiens (Human) protein is Secretoglobin family 1D member 2 (SCGB1D2).